A 523-amino-acid polypeptide reads, in one-letter code: Ribonuclease Y (523 aa).

Residues Thr-28–Ile-48 form a helical membrane-spanning segment. Positions Thr-227 to Val-312 constitute a KH domain. The HD domain occupies Val-353 to Ala-446.

The protein belongs to the RNase Y family.

The protein resides in the cell membrane. Endoribonuclease that initiates mRNA decay. This Clostridium tetani (strain Massachusetts / E88) protein is Ribonuclease Y.